The chain runs to 215 residues: Nascent polypeptide-associated complex subunit alpha (215 aa).

The disordered stretch occupies residues 1-82 (MPGEATETVP…EKKARKAMSK (82 aa)). A compositionally biased stretch (polar residues) spans 9–28 (VPVTEQEMQQPQAETGSGTE). The segment covering 29-42 (SDSDESVPDLEEGD) has biased composition (acidic residues). A compositionally biased stretch (low complexity) spans 44-57 (AQTQTQQAQLAAAA). Residues 70 to 135 (SRSEKKARKA…AKIEDLSQQA (66 aa)) enclose the NAC-A/B domain. A Phosphoserine modification is found at Ser166. The 38-residue stretch at 176-213 (VEVKDIELVMSQANVSRAKAVRALKNNNNDIVNAIMEL) folds into the UBA domain.

It belongs to the NAC-alpha family.

Functionally, may promote appropriate targeting of ribosome-nascent polypeptide complexes. The protein is Nascent polypeptide-associated complex subunit alpha (naca) of Danio rerio (Zebrafish).